The primary structure comprises 36 residues: Photosystem II reaction center protein Y (36 aa).

Residues 1-4 (MDSR) lie on the Lumenal side of the membrane. Residues 5 to 23 (LLIVLIPVLAAASWAVYNI) form a helical membrane-spanning segment. Residues 24 to 36 (GRVALQQFRKMTS) are Stromal-facing.

This sequence belongs to the PsbY family. PSII is composed of 1 copy each of membrane proteins PsbA, PsbB, PsbC, PsbD, PsbE, PsbF, PsbH, PsbI, PsbJ, PsbK, PsbL, PsbM, PsbT, PsbX, PsbY, PsbZ, Psb30/Ycf12, at least 3 peripheral proteins of the oxygen-evolving complex and a large number of cofactors. It forms dimeric complexes.

It is found in the plastid. The protein resides in the chloroplast thylakoid membrane. Functionally, loosely associated component of the core of photosystem II (PSII), it is not always seen in crystals. PSII is a light-driven water plastoquinone oxidoreductase, using light energy to abstract electrons from H(2)O, generating a proton gradient subsequently used for ATP formation. The sequence is that of Photosystem II reaction center protein Y from Porphyra purpurea (Red seaweed).